A 406-amino-acid polypeptide reads, in one-letter code: NADH-quinone oxidoreductase subunit D (406 aa).

The protein belongs to the complex I 49 kDa subunit family. NDH-1 is composed of 14 different subunits. Subunits NuoB, C, D, E, F, and G constitute the peripheral sector of the complex.

Its subcellular location is the cell inner membrane. It catalyses the reaction a quinone + NADH + 5 H(+)(in) = a quinol + NAD(+) + 4 H(+)(out). In terms of biological role, NDH-1 shuttles electrons from NADH, via FMN and iron-sulfur (Fe-S) centers, to quinones in the respiratory chain. The immediate electron acceptor for the enzyme in this species is believed to be ubiquinone. Couples the redox reaction to proton translocation (for every two electrons transferred, four hydrogen ions are translocated across the cytoplasmic membrane), and thus conserves the redox energy in a proton gradient. The chain is NADH-quinone oxidoreductase subunit D from Rhizorhabdus wittichii (strain DSM 6014 / CCUG 31198 / JCM 15750 / NBRC 105917 / EY 4224 / RW1) (Sphingomonas wittichii).